Consider the following 136-residue polypeptide: Gonadotropin subunit beta-2 (136 aa).

Positions 1 to 21 (MVCLFLGASSFIWSLAPAAAA) are cleaved as a signal peptide. 6 disulfides stabilise this stretch: Cys-27/Cys-75, Cys-41/Cys-90, Cys-44/Cys-128, Cys-52/Cys-106, Cys-56/Cys-108, and Cys-111/Cys-118. Asn-31 carries N-linked (GlcNAc...) asparagine glycosylation.

The protein belongs to the glycoprotein hormones subunit beta family. In terms of assembly, heterodimer of an alpha and a beta chain.

The protein resides in the secreted. Functionally, involved in gametogenesis and steroidogenesis. This Fundulus heteroclitus (Killifish) protein is Gonadotropin subunit beta-2 (cgbb).